Consider the following 370-residue polypeptide: Ubiquitin carboxyl-terminal hydrolase 12 (370 aa).

The Required for plasma membrane localization of USP12/WDR20 signature appears at 1–4; the sequence is MEIL. A USP domain is found at 39-369; the sequence is FGLVNFGNTC…SGYILFYQSR (331 aa). The active-site Nucleophile is the cysteine 48. Positions 146-157 are enriched in basic and acidic residues; the sequence is QEKQNGRLRNGD. Residues 146–168 form a disordered region; sequence QEKQNGRLRNGDVDSEDNNSTPD. Cysteine 186, cysteine 189, cysteine 233, and cysteine 236 together coordinate Zn(2+). Histidine 317 functions as the Proton acceptor in the catalytic mechanism.

It belongs to the peptidase C19 family. USP12/USP46 subfamily. Interacts with WDR48. Interacts with WDR20; this interaction promotes translocation of the USP12 complex to the plasma membrane. Component of the USP12-WDR20-WDR48 deubiquitinating complex. Component of the USP12-DMWD-WDR48 deubiquitinating complex. Interacts with PHLPP1. Interacts with RBPJ. Interacts with CBP; this interaction blocks the acetyltransferase activity of CREBBP. Interacts with ITCH; the interaction is more efficient when both USP12 and WDR48/UAF1 are involved and may mediate recruitment of the USP12 deubiquitinating complex to Notch.

Its subcellular location is the nucleus. It localises to the cytoplasm. The protein localises to the cell membrane. The enzyme catalyses Thiol-dependent hydrolysis of ester, thioester, amide, peptide and isopeptide bonds formed by the C-terminal Gly of ubiquitin (a 76-residue protein attached to proteins as an intracellular targeting signal).. Activated by interaction with WDR20, WDR48 and DMWD through different allosteric mechanisms. Deubiquitinating enzyme that plays various roles in the regulation of the immune response and inflammation. During TCR engagement and activation, translocates into the cytoplasm and deubiquitinates its substrates LAT and TRAT1 and prevents their lysosome-dependent degradation to stabilize the TCR signaling complex at the plasma membrane. Plays an essential role in the selective LPS-induced macrophage response through the activation of NF-kappa-B pathway. In addition, promotes that antiviral immune response through targeting DNA sensor IFI16 to inhibit its proteasome-dependent degradation. Participates in the interferon signaling pathway and antiviral response independently of its deubiquitinase activity by maintaining nuclear phosphorylated STAT1 levels via inhibition of its CREBBP-mediated acetylation and subsequent dephosphorylation. Plays an intrinsic role in promoting the differentiation, activation and proliferation of CD4(+) T-cell by activating the NF-kappa-B signaling pathway through deubiquitinating and stabilizing B-cell lymphoma/leukemia 10/BCL10. In myeloid-derived suppressor cells promotes the activation of the NF-kappa-B via deubiquitination and stabilization of RELA. Regulates the 'Lys-63'-linked polyubiquitin chains of BAX and thereby modulates the mitochondrial apoptotic process. Negative regulator of NOTCH signaling that specifically deubiquitinates non-activated NOTCH receptors to target them for lysosomal degradation; deubiquitination of NOTCH stimulates its transport form late endosomes to lysosomes. Protects neurons against HTT/huntingtin-induced polyglutamine expansion-dependent neurodegeneration through regulation of autophagic flux. This function is independent of deubiquitinase activity or of other components of the USP12-WDR20-WDR48 deubiquitinating complex. In complex with WDR48, acts as a potential tumor suppressor by positively regulating PHLPP1 stability. This is Ubiquitin carboxyl-terminal hydrolase 12 from Rattus norvegicus (Rat).